The following is a 103-amino-acid chain: Urease subunit beta (103 aa).

It belongs to the urease beta subunit family. Heterotrimer of UreA (gamma), UreB (beta) and UreC (alpha) subunits. Three heterotrimers associate to form the active enzyme.

Its subcellular location is the cytoplasm. It carries out the reaction urea + 2 H2O + H(+) = hydrogencarbonate + 2 NH4(+). Its pathway is nitrogen metabolism; urea degradation; CO(2) and NH(3) from urea (urease route): step 1/1. This Blochmanniella floridana protein is Urease subunit beta.